We begin with the raw amino-acid sequence, 404 residues long: Cysteine desulfurase IscS (404 aa).

Pyridoxal 5'-phosphate is bound by residues 75–76 (AT), Asn155, Gln183, and 203–205 (SSH). Lys206 is modified (N6-(pyridoxal phosphate)lysine). Residue Thr243 participates in pyridoxal 5'-phosphate binding. The active-site Cysteine persulfide intermediate is Cys328. [2Fe-2S] cluster is bound at residue Cys328.

The protein belongs to the class-V pyridoxal-phosphate-dependent aminotransferase family. NifS/IscS subfamily. As to quaternary structure, homodimer. Forms a heterotetramer with IscU, interacts with other sulfur acceptors. Requires pyridoxal 5'-phosphate as cofactor.

Its subcellular location is the cytoplasm. The enzyme catalyses (sulfur carrier)-H + L-cysteine = (sulfur carrier)-SH + L-alanine. Its pathway is cofactor biosynthesis; iron-sulfur cluster biosynthesis. In terms of biological role, master enzyme that delivers sulfur to a number of partners involved in Fe-S cluster assembly, tRNA modification or cofactor biosynthesis. Catalyzes the removal of elemental sulfur atoms from cysteine to produce alanine. Functions as a sulfur delivery protein for Fe-S cluster synthesis onto IscU, an Fe-S scaffold assembly protein, as well as other S acceptor proteins. This Histophilus somni (strain 129Pt) (Haemophilus somnus) protein is Cysteine desulfurase IscS.